A 193-amino-acid chain; its full sequence is Peptidyl-tRNA hydrolase (193 aa).

Tyr17 is a binding site for tRNA. The active-site Proton acceptor is the His22. Residues Tyr68, Asn70, and Asn116 each contribute to the tRNA site.

This sequence belongs to the PTH family. In terms of assembly, monomer.

It is found in the cytoplasm. The catalysed reaction is an N-acyl-L-alpha-aminoacyl-tRNA + H2O = an N-acyl-L-amino acid + a tRNA + H(+). Hydrolyzes ribosome-free peptidyl-tRNAs (with 1 or more amino acids incorporated), which drop off the ribosome during protein synthesis, or as a result of ribosome stalling. In terms of biological role, catalyzes the release of premature peptidyl moieties from peptidyl-tRNA molecules trapped in stalled 50S ribosomal subunits, and thus maintains levels of free tRNAs and 50S ribosomes. The protein is Peptidyl-tRNA hydrolase of Acinetobacter baumannii (strain AB307-0294).